Here is a 395-residue protein sequence, read N- to C-terminus: S-adenosylmethionine synthase (395 aa).

ATP is bound at residue H14. D16 contributes to the Mg(2+) binding site. K(+) is bound at residue E42. E55 and Q98 together coordinate L-methionine. The segment at 98-108 (QSPDIAMGVDK) is flexible loop. Residues 175 to 177 (DGK), 242 to 243 (RF), D251, 257 to 258 (RK), A274, and K278 each bind ATP. Residue D251 participates in L-methionine binding. K282 serves as a coordination point for L-methionine.

It belongs to the AdoMet synthase family. Homotetramer; dimer of dimers. Requires Mg(2+) as cofactor. The cofactor is K(+).

It is found in the cytoplasm. The catalysed reaction is L-methionine + ATP + H2O = S-adenosyl-L-methionine + phosphate + diphosphate. The protein operates within amino-acid biosynthesis; S-adenosyl-L-methionine biosynthesis; S-adenosyl-L-methionine from L-methionine: step 1/1. Catalyzes the formation of S-adenosylmethionine (AdoMet) from methionine and ATP. The overall synthetic reaction is composed of two sequential steps, AdoMet formation and the subsequent tripolyphosphate hydrolysis which occurs prior to release of AdoMet from the enzyme. In Thermosipho melanesiensis (strain DSM 12029 / CIP 104789 / BI429), this protein is S-adenosylmethionine synthase.